A 111-amino-acid polypeptide reads, in one-letter code: MSFSECPLVISACKKFLQKRITIENEALINALITALAQTSTLNDLCLLPIQTYLLSYKNAFEWIHFVCIAITTILDSKYNWKDCTVDINYIFLHVTYIYNIKTKEYLDYCS.

This sequence belongs to the asfivirus E111R family.

This is an uncharacterized protein from Ornithodoros (relapsing fever ticks).